The primary structure comprises 141 residues: uncharacterized protein (141 aa).

This is an uncharacterized protein from Acheta domesticus (House cricket).